A 1302-amino-acid chain; its full sequence is Phosphoribosylformylglycinamidine synthase (1302 aa).

ATP is bound by residues 307–318 (GASTGSGGEIRD) and alanine 678. The Mg(2+) site is built by glutamate 718, asparagine 722, and aspartate 891. The Glutamine amidotransferase type-1 domain maps to 1049-1302 (MAILREQGVN…MFQNARKNIG (254 aa)). The active-site Nucleophile is the cysteine 1142. Catalysis depends on residues histidine 1267 and glutamate 1269.

In the N-terminal section; belongs to the FGAMS family. In terms of assembly, monomer.

The protein localises to the cytoplasm. It carries out the reaction N(2)-formyl-N(1)-(5-phospho-beta-D-ribosyl)glycinamide + L-glutamine + ATP + H2O = 2-formamido-N(1)-(5-O-phospho-beta-D-ribosyl)acetamidine + L-glutamate + ADP + phosphate + H(+). It participates in purine metabolism; IMP biosynthesis via de novo pathway; 5-amino-1-(5-phospho-D-ribosyl)imidazole from N(2)-formyl-N(1)-(5-phospho-D-ribosyl)glycinamide: step 1/2. Its function is as follows. Phosphoribosylformylglycinamidine synthase involved in the purines biosynthetic pathway. Catalyzes the ATP-dependent conversion of formylglycinamide ribonucleotide (FGAR) and glutamine to yield formylglycinamidine ribonucleotide (FGAM) and glutamate. The chain is Phosphoribosylformylglycinamidine synthase from Vibrio parahaemolyticus serotype O3:K6 (strain RIMD 2210633).